The primary structure comprises 265 residues: Tryptophan synthase alpha chain (265 aa).

Active-site proton acceptor residues include Glu49 and Asp60.

The protein belongs to the TrpA family. Tetramer of two alpha and two beta chains.

It carries out the reaction (1S,2R)-1-C-(indol-3-yl)glycerol 3-phosphate + L-serine = D-glyceraldehyde 3-phosphate + L-tryptophan + H2O. It functions in the pathway amino-acid biosynthesis; L-tryptophan biosynthesis; L-tryptophan from chorismate: step 5/5. Functionally, the alpha subunit is responsible for the aldol cleavage of indoleglycerol phosphate to indole and glyceraldehyde 3-phosphate. This is Tryptophan synthase alpha chain from Desulfosudis oleivorans (strain DSM 6200 / JCM 39069 / Hxd3) (Desulfococcus oleovorans).